The following is a 187-amino-acid chain: Peptidyl-tRNA hydrolase (187 aa).

Tyrosine 14 contacts tRNA. The active-site Proton acceptor is the histidine 19. 2 residues coordinate tRNA: phenylalanine 60 and asparagine 62.

This sequence belongs to the PTH family. Monomer.

The protein localises to the cytoplasm. It catalyses the reaction an N-acyl-L-alpha-aminoacyl-tRNA + H2O = an N-acyl-L-amino acid + a tRNA + H(+). Hydrolyzes ribosome-free peptidyl-tRNAs (with 1 or more amino acids incorporated), which drop off the ribosome during protein synthesis, or as a result of ribosome stalling. In terms of biological role, catalyzes the release of premature peptidyl moieties from peptidyl-tRNA molecules trapped in stalled 50S ribosomal subunits, and thus maintains levels of free tRNAs and 50S ribosomes. In Pseudothermotoga lettingae (strain ATCC BAA-301 / DSM 14385 / NBRC 107922 / TMO) (Thermotoga lettingae), this protein is Peptidyl-tRNA hydrolase.